A 301-amino-acid polypeptide reads, in one-letter code: Pseudouridine-5'-phosphate glycosidase (301 aa).

Catalysis depends on E25, which acts as the Proton donor. 2 residues coordinate substrate: K86 and V106. D138 lines the Mn(2+) pocket. 140–142 (SAD) lines the substrate pocket. Catalysis depends on K159, which acts as the Nucleophile.

This sequence belongs to the pseudouridine-5'-phosphate glycosidase family. As to quaternary structure, homotrimer. It depends on Mn(2+) as a cofactor.

It carries out the reaction D-ribose 5-phosphate + uracil = psi-UMP + H2O. In terms of biological role, catalyzes the reversible cleavage of pseudouridine 5'-phosphate (PsiMP) to ribose 5-phosphate and uracil. Functions biologically in the cleavage direction, as part of a pseudouridine degradation pathway. This is Pseudouridine-5'-phosphate glycosidase from Geobacillus kaustophilus (strain HTA426).